The chain runs to 480 residues: ATP synthase subunit beta (480 aa).

An ATP-binding site is contributed by 152–159 (GGAGVGKT).

The protein belongs to the ATPase alpha/beta chains family. In terms of assembly, F-type ATPases have 2 components, CF(1) - the catalytic core - and CF(0) - the membrane proton channel. CF(1) has five subunits: alpha(3), beta(3), gamma(1), delta(1), epsilon(1). CF(0) has three main subunits: a(1), b(2) and c(9-12). The alpha and beta chains form an alternating ring which encloses part of the gamma chain. CF(1) is attached to CF(0) by a central stalk formed by the gamma and epsilon chains, while a peripheral stalk is formed by the delta and b chains.

It localises to the cell membrane. It carries out the reaction ATP + H2O + 4 H(+)(in) = ADP + phosphate + 5 H(+)(out). In terms of biological role, produces ATP from ADP in the presence of a proton gradient across the membrane. The catalytic sites are hosted primarily by the beta subunits. This is ATP synthase subunit beta from Wolbachia sp. subsp. Brugia malayi (strain TRS).